A 92-amino-acid polypeptide reads, in one-letter code: Small ribosomal subunit protein uS19 (92 aa).

It belongs to the universal ribosomal protein uS19 family.

Protein S19 forms a complex with S13 that binds strongly to the 16S ribosomal RNA. The polypeptide is Small ribosomal subunit protein uS19 (Cyanothece sp. (strain PCC 7425 / ATCC 29141)).